The sequence spans 146 residues: Leghemoglobin 1 (146 aa).

The Globin domain occupies 2 to 146 (GFTAQQDALV…LAAAIKKAMS (145 aa)). Ser-13 and Ser-14 each carry phosphoserine; by CCAMK. Nitrated tyrosine is present on Tyr-30. Phosphoserine; by CCAMK is present on residues Ser-45 and Ser-55. Ser-45 provides a ligand contact to heme b. His-61 serves as a coordination point for O2. Positions 64, 93, and 96 each coordinate heme b. At Ser-123 the chain carries Phosphoserine; by CCAMK. Position 134 is a nitrated tyrosine (Tyr-134).

The protein belongs to the plant globin family. Monomer. In terms of processing, nitrated in effective nodules and particularly in hypoxic conditions; this mechanism may play a protective role in the symbiosis by buffering toxic peroxynitrite NO(2)(-). Nitration level decrease during nodule senescence. Phosphorylated by CCAMK at serine residues in a Ca(2+)-dependent manner; the phosphorylation at Ser-45 disrupts the molecular environment of its porphyrin ring oxygen binding pocket, thus leading to a reduced oxygen consumption and to the delivery of oxygen O(2) to symbiosomes. Specifically and strongly expressed in root nodules and at low levels in seedlings.

The protein resides in the cytoplasm. It localises to the cytosol. It is found in the nucleus. Functionally, leghemoglobin that reversibly binds oxygen O(2) through a pentacoordinated heme iron. In root nodules, facilitates the diffusion of oxygen to the bacteroids while preventing the bacterial nitrogenase from being inactivated by buffering dioxygen, nitric oxide and carbon monoxide, and promoting the formation of reactive oxygen species (ROS, e.g. H(2)O(2)). This role is essential for symbiotic nitrogen fixation (SNF). The protein is Leghemoglobin 1 of Lotus japonicus (Lotus corniculatus var. japonicus).